The chain runs to 312 residues: Nodulation protein D 2 (312 aa).

In terms of domain architecture, HTH lysR-type spans 6 to 63; the sequence is LDLNLLVALDALMTKRSVTAAARSINLSQPAMSAAIARLRTYFGDDLFTMRGRELIPT. The H-T-H motif DNA-binding region spans 23–42; the sequence is VTAAARSINLSQPAMSAAIA.

Belongs to the LysR transcriptional regulatory family.

Represses the expression of the nodABCIJ-nolO-noeI operon. The protein is Nodulation protein D 2 (nodD2) of Sinorhizobium fredii (strain NBRC 101917 / NGR234).